Consider the following 203-residue polypeptide: SOSS complex subunit B1-A (203 aa).

A DNA-binding region (OB) is located at residues 22–92 (IVLETGRVTK…TLYTGRGGDL (71 aa)). Positions 110-203 (EPNPEYIAQQ…GKESRRTGKR (94 aa)) are disordered. The segment covering 118–140 (QQSQSKQGQQESGTGTNNHNSSS) has biased composition (low complexity). Residues 149 to 182 (ENGNGSNSSGPPAHQSTAPAHSASGRITRSQPNH) are compositionally biased toward polar residues.

It belongs to the SOSS-B family. SOSS-B1 subfamily. As to quaternary structure, component of the SOSS complex, composed of soss-b (soss-b1/nabp2 or soss-b2/nabp1), soss-a/ints3 and soss-c/inip. SOSS complexes containing soss-b1/nabp2 are more abundant than complexes containing soss-b2/nabp1.

It is found in the nucleus. In terms of biological role, component of the SOSS complex, a multiprotein complex that functions downstream of the MRN complex to promote DNA repair and G2/M checkpoint. In the SOSS complex, acts as a sensor of single-stranded DNA that binds to single-stranded DNA. The SOSS complex associates with DNA lesions and influences diverse endpoints in the cellular DNA damage response including cell-cycle checkpoint activation, recombinational repair and maintenance of genomic stability. Required for efficient homologous recombination-dependent repair of double-strand breaks (DSBs). The chain is SOSS complex subunit B1-A (nabp2-a) from Xenopus laevis (African clawed frog).